Reading from the N-terminus, the 278-residue chain is HTH-type transcriptional activator RhaS (278 aa).

In terms of domain architecture, HTH araC/xylS-type spans 174–272 (NQLMAWLEEH…NWSPRDIRQG (99 aa)). DNA-binding regions (H-T-H motif) lie at residues 191 to 212 (EAVA…KQHT) and 239 to 262 (VTEI…RREF).

In terms of assembly, binds DNA as a dimer.

It localises to the cytoplasm. Its function is as follows. Activates expression of the rhaBAD and rhaT operons. The protein is HTH-type transcriptional activator RhaS of Salmonella schwarzengrund (strain CVM19633).